The primary structure comprises 172 residues: SsrA-binding protein (172 aa).

The protein belongs to the SmpB family.

It localises to the cytoplasm. Its function is as follows. Required for rescue of stalled ribosomes mediated by trans-translation. Binds to transfer-messenger RNA (tmRNA), required for stable association of tmRNA with ribosomes. tmRNA and SmpB together mimic tRNA shape, replacing the anticodon stem-loop with SmpB. tmRNA is encoded by the ssrA gene; the 2 termini fold to resemble tRNA(Ala) and it encodes a 'tag peptide', a short internal open reading frame. During trans-translation Ala-aminoacylated tmRNA acts like a tRNA, entering the A-site of stalled ribosomes, displacing the stalled mRNA. The ribosome then switches to translate the ORF on the tmRNA; the nascent peptide is terminated with the 'tag peptide' encoded by the tmRNA and targeted for degradation. The ribosome is freed to recommence translation, which seems to be the essential function of trans-translation. In Dehalococcoides mccartyi (strain ATCC BAA-2266 / KCTC 15142 / 195) (Dehalococcoides ethenogenes (strain 195)), this protein is SsrA-binding protein.